A 228-amino-acid chain; its full sequence is Heat shock 70-related protein 4 (228 aa).

Residues arginine 57–aspartate 80 are disordered. Residues aspartate 68–aspartate 80 are compositionally biased toward basic and acidic residues.

It belongs to the heat shock protein 70 family.

The chain is Heat shock 70-related protein 4 (HSP70.4) from Leishmania major.